The primary structure comprises 317 residues: MYTKIIGTGSYLPEQVRTNADLEKMVDTSDEWIVTRTGIRERHIAAPNETVSTMGFEAATRAIEMAGIEKDQIGLIVVATTSATHAFPSAACQIQSMLGIKGCPAFDVAAACAGFTYALSVADQYVKSGAVKYALVVGSDVLARTCDPTDRGTIIIFGDGAGAAVLAASEEPGIISTHLHADGSYGELLTLPNADRVNPENSIHLTMAGNEVFKVAVTELAHIVDETLAANNLDRSQLDWLVPHQANLRIISATAKKLGMSMDNVVVTLDRHGNTSAASVPCALDEAVRDGRIKPGQLVLLEAFGGGFTWGSVLVRF.

Residues cysteine 112 and histidine 244 contribute to the active site. Positions 245-249 (QANLR) are ACP-binding. Asparagine 274 is an active-site residue.

Belongs to the thiolase-like superfamily. FabH family. Homodimer.

It is found in the cytoplasm. The catalysed reaction is malonyl-[ACP] + acetyl-CoA + H(+) = 3-oxobutanoyl-[ACP] + CO2 + CoA. It participates in lipid metabolism; fatty acid biosynthesis. Its function is as follows. Catalyzes the condensation reaction of fatty acid synthesis by the addition to an acyl acceptor of two carbons from malonyl-ACP. Catalyzes the first condensation reaction which initiates fatty acid synthesis and may therefore play a role in governing the total rate of fatty acid production. Possesses both acetoacetyl-ACP synthase and acetyl transacylase activities. Its substrate specificity determines the biosynthesis of branched-chain and/or straight-chain of fatty acids. This Shigella dysenteriae serotype 1 (strain Sd197) protein is Beta-ketoacyl-[acyl-carrier-protein] synthase III.